A 325-amino-acid polypeptide reads, in one-letter code: LIM and senescent cell antigen-like-containing domain protein 1 (325 aa).

Position 2 is an N-acetylalanine (alanine 2). 5 LIM zinc-binding domains span residues 10–62 (CERC…CEHD), 71–121 (CHQC…CRPC), 135–184 (CQKC…CLPC), 193–243 (CGAC…CETH), and 252–303 (CFHC…CKKC).

As to quaternary structure, component of the heterotrimeric IPP (ILK-PINCH-PARVIN) complex composed of ILK, LIMS1/PINCH and PARVA; the complex binds to F-actin via the C-terminal tail of LIMS1 and the N-terminal region of PARVA, promoting F-actin filament bundling. Formation of the IPP complex is dependent on protein kinase C and precedes integrin-mediated cell adhesion and spreading. Competes with LIMS2 for interaction with ILK. Interacts (via LIM zinc-binding 5) with TGFB1I1. Interacts with SH3/SH2 adapter NCK2, thereby linking the complex to cell surface receptors. In terms of tissue distribution, expressed in most tissues except in the brain.

The protein resides in the cell junction. The protein localises to the focal adhesion. It is found in the cell membrane. Its function is as follows. Within the IPP (ILK-PINCH-PARVIN) complex, binds to F-actin, promoting F-actin bundling, a process required to generate force for actin cytoskeleton reorganization and subsequent dynamic cell adhesion events such as cell spreading and migration. In Homo sapiens (Human), this protein is LIM and senescent cell antigen-like-containing domain protein 1 (LIMS1).